A 240-amino-acid chain; its full sequence is Probable septum site-determining protein MinC (240 aa).

Belongs to the MinC family. Interacts with MinD and FtsZ.

Functionally, cell division inhibitor that blocks the formation of polar Z ring septums. Rapidly oscillates between the poles of the cell to destabilize FtsZ filaments that have formed before they mature into polar Z rings. Prevents FtsZ polymerization. This Acinetobacter baumannii (strain AYE) protein is Probable septum site-determining protein MinC.